The following is a 105-amino-acid chain: Small ribosomal subunit protein uS10 (105 aa).

Belongs to the universal ribosomal protein uS10 family. In terms of assembly, part of the 30S ribosomal subunit.

Involved in the binding of tRNA to the ribosomes. In Rickettsia typhi (strain ATCC VR-144 / Wilmington), this protein is Small ribosomal subunit protein uS10.